Here is a 205-residue protein sequence, read N- to C-terminus: Ras-related protein RABC2b (205 aa).

GTP is bound at residue 20-27; it reads GDSGVGKS. Residues 41–49 carry the Effector region motif; it reads LAPTIGVDF. GTP contacts are provided by residues 67-71, 127-130, and 157-158; these read DTAGQ, NKVD, and SA. S-geranylgeranyl cysteine attachment occurs at residues Cys202 and Cys203.

Belongs to the small GTPase superfamily. Rab family.

The protein resides in the cell membrane. Intracellular vesicle trafficking and protein transport. The sequence is that of Ras-related protein RABC2b (RABC2B) from Arabidopsis thaliana (Mouse-ear cress).